The chain runs to 299 residues: Apolipoprotein E (299 aa).

A signal peptide spans 1–18 (MKVLWAVLVVTLLAGCRA). Tandem repeats lie at residues 74–95 (LLMEDTMKEVKAYKAELEQELA), 96–117 (PMAEDTRARLSKELQAAQARLG), 118–139 (ADMEEVRNRLAQYRGEVQAMLG), 140–161 (QSAEELRARLASHLRKMRKRLL), 162–183 (RDAEDLQKRLAVYKAGAREGAE), 184–205 (RGVSAIRERLASLVEQGRLRSA), and 224–245 (GRLEEVGGQARDRLDVVREQME). The interval 74-245 (LLMEDTMKEV…RLDVVREQME (172 aa)) is 8 X 22 AA approximate tandem repeats. Methionine 137 is subject to Methionine sulfoxide. At serine 141 the chain carries Phosphoserine. Residues 152-162 (HLRKMRKRLLR) form an LDL and other lipoprotein receptors binding region. Residue 156-159 (MRKR) participates in heparin binding. Positions 204 to 273 (SALTSQPLRE…GWFEPMVEDM (70 aa)) are lipid-binding and lipoprotein association. Position 219–226 (219–226 (GERLRGRL)) interacts with heparin. The interval 261-273 (RLKGWFEPMVEDM) is specificity for association with VLDL.

Belongs to the apolipoprotein A1/A4/E family. As to quaternary structure, homotetramer. May interact with ABCA1; functionally associated with ABCA1 in the biogenesis of HDLs. May interact with APP/A4 amyloid-beta peptide; the interaction is extremely stable in vitro but its physiological significance is unclear. May interact with MAPT. May interact with MAP2. In the cerebrospinal fluid, interacts with secreted SORL1. Interacts with PMEL; this allows the loading of PMEL luminal fragment on ILVs to induce fibril nucleation. APOE exists as multiple glycosylated and sialylated glycoforms within cells and in plasma. The extent of glycosylation and sialylation are tissue and context specific. Post-translationally, glycated in plasma VLDL. In terms of processing, phosphorylated by FAM20C in the extracellular medium.

The protein localises to the secreted. It localises to the extracellular space. Its subcellular location is the extracellular matrix. It is found in the extracellular vesicle. The protein resides in the endosome. The protein localises to the multivesicular body. APOE is an apolipoprotein, a protein associating with lipid particles, that mainly functions in lipoprotein-mediated lipid transport between organs via the plasma and interstitial fluids. APOE is a core component of plasma lipoproteins and is involved in their production, conversion and clearance. Apolipoproteins are amphipathic molecules that interact both with lipids of the lipoprotein particle core and the aqueous environment of the plasma. As such, APOE associates with chylomicrons, chylomicron remnants, very low density lipoproteins (VLDL) and intermediate density lipoproteins (IDL) but shows a preferential binding to high-density lipoproteins (HDL). It also binds a wide range of cellular receptors including the LDL receptor/LDLR, the LDL receptor-related proteins LRP1, LRP2 and LRP8 and the very low-density lipoprotein receptor/VLDLR that mediate the cellular uptake of the APOE-containing lipoprotein particles. Finally, APOE also has a heparin-binding activity and binds heparan-sulfate proteoglycans on the surface of cells, a property that supports the capture and the receptor-mediated uptake of APOE-containing lipoproteins by cells. A main function of APOE is to mediate lipoprotein clearance through the uptake of chylomicrons, VLDLs, and HDLs by hepatocytes. APOE is also involved in the biosynthesis by the liver of VLDLs as well as their uptake by peripheral tissues ensuring the delivery of triglycerides and energy storage in muscle, heart and adipose tissues. By participating in the lipoprotein-mediated distribution of lipids among tissues, APOE plays a critical role in plasma and tissues lipid homeostasis. APOE is also involved in two steps of reverse cholesterol transport, the HDLs-mediated transport of cholesterol from peripheral tissues to the liver, and thereby plays an important role in cholesterol homeostasis. First, it is functionally associated with ABCA1 in the biogenesis of HDLs in tissues. Second, it is enriched in circulating HDLs and mediates their uptake by hepatocytes. APOE also plays an important role in lipid transport in the central nervous system, regulating neuron survival and sprouting. The chain is Apolipoprotein E (APOE) from Erethizon dorsatum (North American porcupine).